We begin with the raw amino-acid sequence, 550 residues long: Chaperonin GroEL (550 aa).

ATP-binding positions include 30–33 (TLGP), K51, 87–91 (DGTTT), G415, 479–481 (NAA), and D495.

It belongs to the chaperonin (HSP60) family. In terms of assembly, forms a cylinder of 14 subunits composed of two heptameric rings stacked back-to-back. Interacts with the co-chaperonin GroES.

The protein localises to the cytoplasm. The enzyme catalyses ATP + H2O + a folded polypeptide = ADP + phosphate + an unfolded polypeptide.. Its function is as follows. Together with its co-chaperonin GroES, plays an essential role in assisting protein folding. The GroEL-GroES system forms a nano-cage that allows encapsulation of the non-native substrate proteins and provides a physical environment optimized to promote and accelerate protein folding. This Polynucleobacter asymbioticus (strain DSM 18221 / CIP 109841 / QLW-P1DMWA-1) (Polynucleobacter necessarius subsp. asymbioticus) protein is Chaperonin GroEL.